Here is a 168-residue protein sequence, read N- to C-terminus: Oocyte-secreted protein 2 (168 aa).

The signal sequence occupies residues 1-21; the sequence is MGVSMALEVLVYLAVLVWTCA.

Belongs to the PLAC1 family. Expressed in ovaries. Highly expressed in the germinal vesicles oocytes and metaphase II oocytes.

It is found in the secreted. It localises to the cytoplasm. The polypeptide is Oocyte-secreted protein 2 (Oosp2) (Mus musculus (Mouse)).